We begin with the raw amino-acid sequence, 825 residues long: MTNPVIGTPWQKLDRPVSEEAIEGMDKYWRVANYMSIGQIYLRSNPLMKEPFTRDDVKHRLVGHWGTTPGLNFLLAHINRLIADHQQNTVFIMGPGHGGPAGTAQSYIDGTYTEYYPNITKDEAGLQKFFRQFSYPGGIPSHFAPETPGSIHEGGELGYALSHAYGAIMDNPSLFVPCIIGDGEAETGPLATGWQSNKLVNPRTDGIVLPILHLNGYKIANPTILARISDEELHDFFRGMGYHPYEFVAGFDNEDHLSIHRRFAELFETIFDEICDIKAAAQTDDMTRPFYPMLIFRTPKGWTCPKFIDGKKTEGSWRAHQVPLASARDTEAHFEVLKGWMESYKPEELFNADGSIKEDVTAFMPKGELRIGANPNANGGRIREDLKLPELDQYEITGVKEYGHGWGQVEAPRSLGAYCRDIIKNNPDSFRVFGPDETASNRLNATYEVTKKQWDNGYLSALVDENMAVTGQVVEQLSEHQCEGFLEAYLLTGRHGIWSSYESFVHVIDSMLNQHAKWLEATVREIPWRKPISSVNLLVSSHVWRQDHNGFSHQDPGVTSVLLNKTFNNDHVTNIYFATDANMLLAIAEKCFKSTNKINAIFAGKQPAATWITLDEARAELEAGAAEWKWASNAKSNDEVQVVLAAAGDVPTQEIMAASDALNKMGIKFKVVNVVDLIKLQSSKENDEAMSDEDFADLFTADKPVLFAYHSYAQDVRGLIYDRPNHDNFTVVGYKEQGSTTTPFDMVRVNDMDRYALQAKALELIDADKYADKINELNEFRKTAFQFAVDNGYDIPEFTDWVYPDVKVDETSMLSATAATAGDNE.

It belongs to the XFP family. Thiamine diphosphate is required as a cofactor.

The protein is Probable phosphoketolase of Bifidobacterium animalis subsp. lactis (strain AD011).